Consider the following 422-residue polypeptide: Acylglycerol kinase, mitochondrial (422 aa).

Lys-6 carries the N6-acetyllysine modification. Positions 15-31 are hydrophobic; sequence TTAGLCLLTWGGHWLYG. One can recognise a DAGKc domain in the interval 58 to 199; sequence AQVKKATVFL…LDVLQIKGEK (142 aa). The interval 249-271 is disordered; the sequence is QASISYTGPTERPPSEPEETPVQ.

Belongs to the AGK family. In terms of assembly, component of the TIM22 complex, which core is composed of TIMM22, associated with TIMM10 (TIMM10A and/or TIMM10B), TIMM9, AGK and TIMM29. Interacts with SMIM26. Mg(2+) serves as cofactor.

It localises to the mitochondrion inner membrane. Its subcellular location is the mitochondrion intermembrane space. The catalysed reaction is a monoacylglycerol + ATP = a monoacyl-sn-glycero-3-phosphate + ADP + H(+). It catalyses the reaction a 1,2-diacyl-sn-glycerol + ATP = a 1,2-diacyl-sn-glycero-3-phosphate + ADP + H(+). The enzyme catalyses an N-acylsphing-4-enine + ATP = an N-acylsphing-4-enine 1-phosphate + ADP + H(+). It carries out the reaction 1-(9Z-octadecenoyl)-sn-glycerol + ATP = 1-(9Z-octadecenoyl)-sn-glycero-3-phosphate + ADP + H(+). The catalysed reaction is 1,2-di-(9Z-octadecenoyl)-sn-glycerol + ATP = 1,2-di-(9Z-octadecenoyl)-sn-glycero-3-phosphate + ADP + H(+). It catalyses the reaction a 1-acyl-sn-glycerol + ATP = a 1-acyl-sn-glycero-3-phosphate + ADP + H(+). The enzyme catalyses 1-hexadecanoyl-sn-glycerol + ATP = 1-hexadecanoyl-sn-glycero-3-phosphate + ADP + H(+). It carries out the reaction a 2-acylglycerol + ATP = a 2-acyl-sn-glycerol 3-phosphate + ADP + H(+). The catalysed reaction is 2-(5Z,8Z,11Z,14Z-eicosatetraenoyl)-glycerol + ATP = 2-(5Z,8Z,11Z,14Z-eicosatetraenoyl)-sn-glycero-3-phosphate + ADP + H(+). It catalyses the reaction 1-(5Z,8Z,11Z,14Z-eicosatetraenoyl)-sn-glycerol + ATP = 1-(5Z,8Z,11Z,14Z-eicosatetraenoyl)-sn-glycero-3-phosphate + ADP + H(+). The enzyme catalyses N-(hexanoyl)sphing-4-enine + ATP = N-hexanoylsphing-4-enine 1-phosphate + ADP + H(+). It participates in lipid metabolism; glycerolipid metabolism. Functionally, lipid kinase that can phosphorylate both monoacylglycerol and diacylglycerol to form lysophosphatidic acid (LPA) and phosphatidic acid (PA), respectively. Phosphorylates ceramide but not sphingosine. Phosphorylates 1,2-dioleoylglycerol more rapidly than 2,3-dioleoylglycerol. Independently of its lipid kinase activity, acts as a component of the TIM22 complex. The TIM22 complex mediates the import and insertion of multi-pass transmembrane proteins into the mitochondrial inner membrane by forming a twin-pore translocase that uses the membrane potential as the external driving force. In the TIM22 complex, required for the import of a subset of metabolite carriers into mitochondria, such as ANT1/SLC25A4 and SLC25A24, while it is not required for the import of TIMM23. Overexpression increases the formation and secretion of LPA, resulting in transactivation of EGFR and activation of the downstream MAPK signaling pathway, leading to increased cell growth. The sequence is that of Acylglycerol kinase, mitochondrial from Pongo abelii (Sumatran orangutan).